The primary structure comprises 306 residues: MRVAFAGTPEFAATVLRGLLGSGHEVGLVISQPDAPRGRGRRTASPPVALLAREAGLPLLQPASISEAAGEISRHDALVVAAYGQILRPDTLYAARHGAYNVHASLLPAYRGAAPVERAIMDGERETGVTVIRMDEGLDTGPVALQRRVPIPPDMTGGELADLLARVGAEALVEVLDRLESGTLNLTRQDSSRASYAPRITRQDQEIDWSRDARRVHDQVRALSPHIGARTRHPEVEGPLKIWRTRVHREAGRELAPGELRAGDGRLFVGCESGVVEILELQLPGGRRLGAAEFLRGHSLTGALRR.

Position 105-108 (105-108 (SLLP)) interacts with (6S)-5,6,7,8-tetrahydrofolate.

This sequence belongs to the Fmt family.

The catalysed reaction is L-methionyl-tRNA(fMet) + (6R)-10-formyltetrahydrofolate = N-formyl-L-methionyl-tRNA(fMet) + (6S)-5,6,7,8-tetrahydrofolate + H(+). Attaches a formyl group to the free amino group of methionyl-tRNA(fMet). The formyl group appears to play a dual role in the initiator identity of N-formylmethionyl-tRNA by promoting its recognition by IF2 and preventing the misappropriation of this tRNA by the elongation apparatus. This Rubrobacter xylanophilus (strain DSM 9941 / JCM 11954 / NBRC 16129 / PRD-1) protein is Methionyl-tRNA formyltransferase.